The following is a 100-amino-acid chain: UPF0473 protein lwe1514 (100 aa).

The protein belongs to the UPF0473 family.

The protein is UPF0473 protein lwe1514 of Listeria welshimeri serovar 6b (strain ATCC 35897 / DSM 20650 / CCUG 15529 / CIP 8149 / NCTC 11857 / SLCC 5334 / V8).